Reading from the N-terminus, the 414-residue chain is Gamma-glutamyl phosphate reductase (414 aa).

Belongs to the gamma-glutamyl phosphate reductase family.

The protein resides in the cytoplasm. The catalysed reaction is L-glutamate 5-semialdehyde + phosphate + NADP(+) = L-glutamyl 5-phosphate + NADPH + H(+). Its pathway is amino-acid biosynthesis; L-proline biosynthesis; L-glutamate 5-semialdehyde from L-glutamate: step 2/2. Catalyzes the NADPH-dependent reduction of L-glutamate 5-phosphate into L-glutamate 5-semialdehyde and phosphate. The product spontaneously undergoes cyclization to form 1-pyrroline-5-carboxylate. This is Gamma-glutamyl phosphate reductase from Alkaliphilus metalliredigens (strain QYMF).